Consider the following 547-residue polypeptide: Chaperonin GroEL 1 (547 aa).

ATP is bound by residues 30–33, K51, 87–91, G415, 479–481, and D495; these read TLGP, DGTTT, and NAA.

The protein belongs to the chaperonin (HSP60) family. In terms of assembly, forms a cylinder of 14 subunits composed of two heptameric rings stacked back-to-back. Interacts with the co-chaperonin GroES.

It is found in the cytoplasm. The enzyme catalyses ATP + H2O + a folded polypeptide = ADP + phosphate + an unfolded polypeptide.. Functionally, together with its co-chaperonin GroES, plays an essential role in assisting protein folding. The GroEL-GroES system forms a nano-cage that allows encapsulation of the non-native substrate proteins and provides a physical environment optimized to promote and accelerate protein folding. The chain is Chaperonin GroEL 1 from Vibrio parahaemolyticus serotype O3:K6 (strain RIMD 2210633).